We begin with the raw amino-acid sequence, 298 residues long: Cholesterol 25-hydroxylase (298 aa).

N-linked (GlcNAc...) asparagine glycosylation occurs at Asn5. A run of 3 helical transmembrane segments spans residues 38–58 (FFPV…FVVL), 84–104 (LLPC…PVTL), and 124–144 (LLSH…AWHL). The 136-residue stretch at 128–263 (VLICLLLFDT…FTHWDKMLGT (136 aa)) folds into the Fatty acid hydroxylase domain. A Histidine box-1 motif is present at residues 142 to 146 (WHLLH). A Histidine box-2 motif is present at residues 157–161 (HKVHH). The N-linked (GlcNAc...) asparagine glycan is linked to Asn163. Helical transmembrane passes span 167 to 187 (FALA…FFDV) and 190 to 210 (VAML…NIWL). Residues 238–244 (HHDLHHS) carry the Histidine box-3 motif.

Belongs to the sterol desaturase family. Fe cation is required as a cofactor. Post-translationally, N-glycosylated. As to expression, expressed in testicular macrophages at all stages, with the highest level in 10 day old animals.

It localises to the endoplasmic reticulum membrane. The enzyme catalyses cholesterol + AH2 + O2 = 25-hydroxycholesterol + A + H2O. It carries out the reaction cholesterol + NADPH + O2 + H(+) = 25-hydroxycholesterol + NADP(+) + H2O. Catalyzes the formation of 25-hydroxycholesterol from cholesterol, leading to repress cholesterol biosynthetic enzymes. Plays a key role in cell positioning and movement in lymphoid tissues: 25-hydroxycholesterol is an intermediate in biosynthesis of 7-alpha,25-dihydroxycholesterol (7-alpha,25-OHC), an oxysterol that acts as a ligand for the G protein-coupled receptor GPR183/EBI2, a chemotactic receptor for a number of lymphoid cells. May play an important role in regulating lipid metabolism by synthesizing a corepressor that blocks sterol regulatory element binding protein (SREBP) processing. In testis, production of 25-hydroxycholesterol by macrophages plays a role in Leydig cell differentiation. Required to restrain inflammation in macrophages: production of 25-hydroxycholesterol protects macrophages from cholesterol overload, thereby preventing mitochondrial DNA release and subsequent activation of the AIM2 inflammasome. Interferon-stimulated gene which has broad antiviral activities against a wide range of enveloped viruses. In terms of biological role, catalyzes the formation of 25-hydroxycholesterol from cholesterol, leading to repress cholesterol biosynthetic enzymes. Plays a key role in cell positioning and movement in lymphoid tissues: 25-hydroxycholesterol is an intermediate in biosynthesis of 7-alpha,25-dihydroxycholesterol (7-alpha,25-OHC), an oxysterol that acts as a ligand for the G protein-coupled receptor GPR183/EBI2, a chemotactic receptor for a number of lymphoid cells. May play an important role in regulating lipid metabolism by synthesizing a corepressor that blocks sterol regulatory element binding protein (SREBP) processing. As an interferon-stimulated gene, has broad antiviral activities against a wide range of enveloped viruses. Its product, 25-hydroxycholesterol, activates the ER-localized enzyme ACAT to induce internalization of accessible cholesterol on the plasma membrane and restricts virus-host membranes fusion which inhibits virus replication. In testis, production of 25-hydroxycholesterol by macrophages plays a role in Leydig cell differentiation. The chain is Cholesterol 25-hydroxylase from Rattus norvegicus (Rat).